Reading from the N-terminus, the 189-residue chain is Cell division protein SepF (189 aa).

Disordered stretches follow at residues 1 to 75 (MEGQ…GLPG) and 155 to 174 (STPSSQGMPPLQRPLQSPTP).

Belongs to the SepF family. As to quaternary structure, homodimer. Interacts with FtsZ.

It is found in the cytoplasm. In terms of biological role, cell division protein that is part of the divisome complex and is recruited early to the Z-ring. Probably stimulates Z-ring formation, perhaps through the cross-linking of FtsZ protofilaments. Its function overlaps with FtsA. The polypeptide is Cell division protein SepF (Synechococcus sp. (strain JA-3-3Ab) (Cyanobacteria bacterium Yellowstone A-Prime)).